The chain runs to 377 residues: Phosphatidylglycerol--prolipoprotein diacylglyceryl transferase (377 aa).

4 helical membrane passes run 18–38 (PVPL…AVVV), 48–68 (MDPA…IVGA), 93–113 (IWNG…GAWL), and 119–139 (GISL…AQAI). Position 141 (Arg-141) interacts with a 1,2-diacyl-sn-glycero-3-phospho-(1'-sn-glycerol). Helical transmembrane passes span 177–197 (QPTF…LLLV), 208–228 (LFAL…MLRI), and 238–258 (RVNI…LLVV). The segment at 265–377 (DVSPQEQRAL…RTRVERPPAT (113 aa)) is disordered. Composition is skewed to low complexity over residues 288–297 (AAGETAGETR) and 308–344 (GVDV…DADG).

It belongs to the Lgt family.

The protein resides in the cell membrane. The catalysed reaction is L-cysteinyl-[prolipoprotein] + a 1,2-diacyl-sn-glycero-3-phospho-(1'-sn-glycerol) = an S-1,2-diacyl-sn-glyceryl-L-cysteinyl-[prolipoprotein] + sn-glycerol 1-phosphate + H(+). It functions in the pathway protein modification; lipoprotein biosynthesis (diacylglyceryl transfer). Functionally, catalyzes the transfer of the diacylglyceryl group from phosphatidylglycerol to the sulfhydryl group of the N-terminal cysteine of a prolipoprotein, the first step in the formation of mature lipoproteins. In Frankia alni (strain DSM 45986 / CECT 9034 / ACN14a), this protein is Phosphatidylglycerol--prolipoprotein diacylglyceryl transferase.